We begin with the raw amino-acid sequence, 518 residues long: MNKKYFVLIVCIIFTSALFPTFSSVTAAQGEAVIATDEMNVRSGPGLSYGITAEVKKGERYPILKEDGDWVQIQLGSGEKGWVVSWLITKEDQASTSSSGSSDTVTSTDPDLRMRSGPGTSYEVIGKFPQGSQASVIDKDSGWIKISYHSATGWVSSEYVTSGGSSSASDESDQTEDSGASTTGTVGVSSLNVRASASHDAAIITKLDRGTKLTVLNEKNGWAHIEVNGLKGWVASHYLLTSSVPADDSANAGSSSSAKKAYIMYGGTNLRSDASTSASIVERAAKGDSYTITGSKGSWYEIKLDNGQTAYVANWVVQTSKSAEEAGEPPVSDSPSGNGSLNNKTIIVDPGHGGKDSGTIGYSGKFEKNLTIKTAKLLASKLRSAGADVYVTRQDDTFVSLQSRVSTSHYRNADAFISIHYDSYADTSTRGSTAYYYSPAKDQELASDVHSEVVKRSSIPDRGVLFGDYYVLRENRQPAMLYELGYVSHPQEEAIVHSNSYQEKVTDGIESGLEKYFQ.

The signal sequence occupies residues Met-1–Ala-27. SH3b domains follow at residues Gln-29 to Glu-91, Ser-102 to Gly-164, Ser-181 to Ser-243, and Ala-258 to Ser-320. Disordered stretches follow at residues Ala-94–Ser-121 and Val-160–Val-186. 2 stretches are compositionally biased toward low complexity: residues Ser-95–Thr-108 and Val-160–Ser-169. Residues Ser-322–His-352 form a disordered region. Residues Asp-333 to Thr-345 show a composition bias toward polar residues. Residues Ile-346–Glu-514 enclose the MurNAc-LAA domain.

The protein belongs to the N-acetylmuramoyl-L-alanine amidase 3 family.

The protein localises to the secreted. It is found in the cell wall. The enzyme catalyses Hydrolyzes the link between N-acetylmuramoyl residues and L-amino acid residues in certain cell-wall glycopeptides.. Its function is as follows. Probably involved in cell-wall metabolism. The polypeptide is Putative N-acetylmuramoyl-L-alanine amidase YrvJ (yrvJ) (Bacillus subtilis (strain 168)).